A 298-amino-acid polypeptide reads, in one-letter code: uncharacterized protein (298 aa).

The N-terminal stretch at 1–19 is a signal peptide; sequence MFRKFLFIQLLIVTSLVKA. A disordered region spans residues 278 to 298; that stretch reads RNNPPLKNNNAKSKNSYETYK. Over residues 279 to 298 the composition is skewed to low complexity; that stretch reads NNPPLKNNNAKSKNSYETYK.

This sequence to R.prowazekii RP296.

This is an uncharacterized protein from Rickettsia prowazekii (strain Madrid E).